Consider the following 340-residue polypeptide: Phosphoribosylformylglycinamidine cyclo-ligase (340 aa).

Belongs to the AIR synthase family.

It is found in the cytoplasm. The enzyme catalyses 2-formamido-N(1)-(5-O-phospho-beta-D-ribosyl)acetamidine + ATP = 5-amino-1-(5-phospho-beta-D-ribosyl)imidazole + ADP + phosphate + H(+). It participates in purine metabolism; IMP biosynthesis via de novo pathway; 5-amino-1-(5-phospho-D-ribosyl)imidazole from N(2)-formyl-N(1)-(5-phospho-D-ribosyl)glycinamide: step 2/2. This chain is Phosphoribosylformylglycinamidine cyclo-ligase, found in Crocosphaera subtropica (strain ATCC 51142 / BH68) (Cyanothece sp. (strain ATCC 51142)).